Reading from the N-terminus, the 304-residue chain is uncharacterized protein (304 aa).

Polar residues predominate over residues 226–244 (SRNSESSRQSNLNSPNDSV). The interval 226–263 (SRNSESSRQSNLNSPNDSVKFNEFNKSNKSTKTNPNNI) is disordered. Residues 246–262 (FNEFNKSNKSTKTNPNN) show a composition bias toward low complexity.

This is an uncharacterized protein from Acanthamoeba polyphaga (Amoeba).